The primary structure comprises 232 residues: Thiamine import ATP-binding protein ThiQ (232 aa).

Residues 2–230 (LKLTDITWLY…KGSASAIWGI (229 aa)) enclose the ABC transporter domain. 32 to 39 (GPSGAGKS) is a binding site for ATP.

Belongs to the ABC transporter superfamily. Thiamine importer (TC 3.A.1.19.1) family. In terms of assembly, the complex is composed of two ATP-binding proteins (ThiQ), two transmembrane proteins (ThiP) and a solute-binding protein (ThiB).

Its subcellular location is the cell inner membrane. The catalysed reaction is thiamine(out) + ATP + H2O = thiamine(in) + ADP + phosphate + H(+). Functionally, part of the ABC transporter complex ThiBPQ involved in thiamine import. Responsible for energy coupling to the transport system. The sequence is that of Thiamine import ATP-binding protein ThiQ from Shigella flexneri.